The chain runs to 140 residues: Anti-sigma F factor (140 aa).

Belongs to the anti-sigma-factor family.

It carries out the reaction L-seryl-[protein] + ATP = O-phospho-L-seryl-[protein] + ADP + H(+). The enzyme catalyses L-threonyl-[protein] + ATP = O-phospho-L-threonyl-[protein] + ADP + H(+). Its function is as follows. Binds to sigma F and blocks its ability to form an RNA polymerase holoenzyme (E-sigma F). Phosphorylates SpoIIAA on a serine residue. This phosphorylation may enable SpoIIAA to act as an anti-anti-sigma factor that counteracts SpoIIAB and thus releases sigma F from inhibition. The protein is Anti-sigma F factor of Clostridium perfringens (strain SM101 / Type A).